A 469-amino-acid polypeptide reads, in one-letter code: 3-isopropylmalate dehydratase large subunit (469 aa).

Residues Cys350, Cys410, and Cys413 each coordinate [4Fe-4S] cluster.

It belongs to the aconitase/IPM isomerase family. LeuC type 1 subfamily. As to quaternary structure, heterodimer of LeuC and LeuD. The cofactor is [4Fe-4S] cluster.

It catalyses the reaction (2R,3S)-3-isopropylmalate = (2S)-2-isopropylmalate. The protein operates within amino-acid biosynthesis; L-leucine biosynthesis; L-leucine from 3-methyl-2-oxobutanoate: step 2/4. In terms of biological role, catalyzes the isomerization between 2-isopropylmalate and 3-isopropylmalate, via the formation of 2-isopropylmaleate. The sequence is that of 3-isopropylmalate dehydratase large subunit from Chelativorans sp. (strain BNC1).